A 448-amino-acid polypeptide reads, in one-letter code: Histidinol dehydrogenase (448 aa).

NAD(+) contacts are provided by Tyr136, Gln197, and Asn220. Substrate-binding residues include Ser243, Gln265, and His268. The Zn(2+) site is built by Gln265 and His268. Active-site proton acceptor residues include Glu333 and His334. The substrate site is built by His334, Asp367, Glu421, and His426. Asp367 is a binding site for Zn(2+). A Zn(2+)-binding site is contributed by His426.

Belongs to the histidinol dehydrogenase family. It depends on Zn(2+) as a cofactor.

It catalyses the reaction L-histidinol + 2 NAD(+) + H2O = L-histidine + 2 NADH + 3 H(+). The protein operates within amino-acid biosynthesis; L-histidine biosynthesis; L-histidine from 5-phospho-alpha-D-ribose 1-diphosphate: step 9/9. Functionally, catalyzes the sequential NAD-dependent oxidations of L-histidinol to L-histidinaldehyde and then to L-histidine. The polypeptide is Histidinol dehydrogenase (Pseudomonas syringae pv. syringae (strain B728a)).